Reading from the N-terminus, the 303-residue chain is GTP cyclohydrolase FolE2 (303 aa).

It belongs to the GTP cyclohydrolase IV family.

It catalyses the reaction GTP + H2O = 7,8-dihydroneopterin 3'-triphosphate + formate + H(+). It functions in the pathway cofactor biosynthesis; 7,8-dihydroneopterin triphosphate biosynthesis; 7,8-dihydroneopterin triphosphate from GTP: step 1/1. In terms of biological role, converts GTP to 7,8-dihydroneopterin triphosphate. This is GTP cyclohydrolase FolE2 from Exiguobacterium sp. (strain ATCC BAA-1283 / AT1b).